A 189-amino-acid polypeptide reads, in one-letter code: Ribonuclease M5 2 (189 aa).

A Toprim domain is found at 8–91; it reads SQVIVAEGRD…VFLKRDEAVP (84 aa). Positions 14, 60, and 62 each coordinate Mg(2+).

The protein belongs to the ribonuclease M5 family. Requires Mg(2+) as cofactor.

It is found in the cytoplasm. The catalysed reaction is Endonucleolytic cleavage of RNA, removing 21 and 42 nucleotides, respectively, from the 5'- and 3'-termini of a 5S-rRNA precursor.. Functionally, required for correct processing of both the 5' and 3' ends of 5S rRNA precursor. Cleaves both sides of a double-stranded region yielding mature 5S rRNA in one step. The sequence is that of Ribonuclease M5 2 from Ligilactobacillus salivarius (strain UCC118) (Lactobacillus salivarius).